Consider the following 266-residue polypeptide: Hydroxyethylthiazole kinase (266 aa).

Methionine 43 contacts substrate. Positions 119 and 166 each coordinate ATP. Glycine 193 lines the substrate pocket.

It belongs to the Thz kinase family. Mg(2+) is required as a cofactor.

It catalyses the reaction 5-(2-hydroxyethyl)-4-methylthiazole + ATP = 4-methyl-5-(2-phosphooxyethyl)-thiazole + ADP + H(+). Its pathway is cofactor biosynthesis; thiamine diphosphate biosynthesis; 4-methyl-5-(2-phosphoethyl)-thiazole from 5-(2-hydroxyethyl)-4-methylthiazole: step 1/1. In terms of biological role, catalyzes the phosphorylation of the hydroxyl group of 4-methyl-5-beta-hydroxyethylthiazole (THZ). In Methanococcus maripaludis (strain C5 / ATCC BAA-1333), this protein is Hydroxyethylthiazole kinase.